The chain runs to 95 residues: Large ribosomal subunit protein bL25 (95 aa).

Belongs to the bacterial ribosomal protein bL25 family. In terms of assembly, part of the 50S ribosomal subunit; part of the 5S rRNA/L5/L18/L25 subcomplex. Contacts the 5S rRNA. Binds to the 5S rRNA independently of L5 and L18.

Its function is as follows. This is one of the proteins that binds to the 5S RNA in the ribosome where it forms part of the central protuberance. The polypeptide is Large ribosomal subunit protein bL25 (Shewanella putrefaciens (strain CN-32 / ATCC BAA-453)).